The primary structure comprises 1252 residues: DNA-directed RNA polymerase subunit beta (1252 aa).

It belongs to the RNA polymerase beta chain family. As to quaternary structure, the RNAP catalytic core consists of 2 alpha, 1 beta, 1 beta' and 1 omega subunit. When a sigma factor is associated with the core the holoenzyme is formed, which can initiate transcription.

It catalyses the reaction RNA(n) + a ribonucleoside 5'-triphosphate = RNA(n+1) + diphosphate. In terms of biological role, DNA-dependent RNA polymerase catalyzes the transcription of DNA into RNA using the four ribonucleoside triphosphates as substrates. This is DNA-directed RNA polymerase subunit beta from Chlamydia pneumoniae (Chlamydophila pneumoniae).